Consider the following 228-residue polypeptide: Interleukin-27 subunit beta (228 aa).

A signal peptide spans 1–18 (MSKLLFLSLALWASRSPG). Fibronectin type-III domains are found at residues 26–124 (ALSQ…VAER) and 127–224 (KPDP…VESA). Residues Asn-54 and Asn-104 are each glycosylated (N-linked (GlcNAc...) asparagine).

This sequence belongs to the type I cytokine receptor family. Type 3 subfamily. As to quaternary structure, heterodimer with IL27/IL27A; not disulfide-linked. This heterodimer is known as interleukin IL-27. Heterodimer with IL12A; not disulfide-linked. This heterodimer is known as interleukin IL-35. Interacts with SQSTM1.

It localises to the secreted. In terms of biological role, associates with IL27 to form the IL-27 interleukin, a heterodimeric cytokine which functions in innate immunity. IL-27 has pro- and anti-inflammatory properties, that can regulate T-helper cell development, suppress T-cell proliferation, stimulate cytotoxic T-cell activity, induce isotype switching in B-cells, and that has diverse effects on innate immune cells. Among its target cells are CD4 T-helper cells which can differentiate in type 1 effector cells (TH1), type 2 effector cells (TH2) and IL17 producing helper T-cells (TH17). It drives rapid clonal expansion of naive but not memory CD4 T-cells. It also strongly synergizes with IL-12 to trigger interferon-gamma/IFN-gamma production of naive CD4 T-cells, binds to the cytokine receptor WSX-1/TCCR. Another important role of IL-27 is its antitumor activity as well as its antiangiogenic activity with activation of production of antiangiogenic chemokines. The chain is Interleukin-27 subunit beta (Ebi3) from Mus musculus (Mouse).